The following is a 359-amino-acid chain: 3-dehydroquinate synthase (359 aa).

NAD(+) contacts are provided by residues 71–76 (DGEAYK), 105–109 (GVVGD), 129–130 (TT), K142, and K151. The Zn(2+) site is built by E184, H247, and H264.

It belongs to the sugar phosphate cyclases superfamily. Dehydroquinate synthase family. The cofactor is Co(2+). Zn(2+) serves as cofactor. NAD(+) is required as a cofactor.

It is found in the cytoplasm. It catalyses the reaction 7-phospho-2-dehydro-3-deoxy-D-arabino-heptonate = 3-dehydroquinate + phosphate. Its pathway is metabolic intermediate biosynthesis; chorismate biosynthesis; chorismate from D-erythrose 4-phosphate and phosphoenolpyruvate: step 2/7. Its function is as follows. Catalyzes the conversion of 3-deoxy-D-arabino-heptulosonate 7-phosphate (DAHP) to dehydroquinate (DHQ). This chain is 3-dehydroquinate synthase, found in Burkholderia lata (strain ATCC 17760 / DSM 23089 / LMG 22485 / NCIMB 9086 / R18194 / 383).